The primary structure comprises 69 residues: Cell division protein ZapB (69 aa).

Residues 3 to 60 adopt a coiled-coil conformation; it reads LELFNQLEQKVQNAVETIEMLKMEAEELREENTRLKQERDEWERRLNGLLGKFQEIED.

This sequence belongs to the ZapB family. As to quaternary structure, homodimer. The ends of the coiled-coil dimer bind to each other, forming polymers. Interacts with FtsZ.

The protein localises to the cytoplasm. Functionally, non-essential, abundant cell division factor that is required for proper Z-ring formation. It is recruited early to the divisome by direct interaction with FtsZ, stimulating Z-ring assembly and thereby promoting cell division earlier in the cell cycle. Its recruitment to the Z-ring requires functional FtsA or ZipA. The sequence is that of Cell division protein ZapB from Chromohalobacter salexigens (strain ATCC BAA-138 / DSM 3043 / CIP 106854 / NCIMB 13768 / 1H11).